Here is a 162-residue protein sequence, read N- to C-terminus: 2-C-methyl-D-erythritol 2,4-cyclodiphosphate synthase (162 aa).

2 residues coordinate a divalent metal cation: aspartate 12 and histidine 14. Residues 12 to 14 (DVH) and 38 to 39 (HS) contribute to the 4-CDP-2-C-methyl-D-erythritol 2-phosphate site. An a divalent metal cation-binding site is contributed by histidine 46. Residues 60–62 (DIG), 65–69 (FPDTD), and arginine 146 each bind 4-CDP-2-C-methyl-D-erythritol 2-phosphate.

This sequence belongs to the IspF family. Homotrimer. A divalent metal cation serves as cofactor.

It carries out the reaction 4-CDP-2-C-methyl-D-erythritol 2-phosphate = 2-C-methyl-D-erythritol 2,4-cyclic diphosphate + CMP. It participates in isoprenoid biosynthesis; isopentenyl diphosphate biosynthesis via DXP pathway; isopentenyl diphosphate from 1-deoxy-D-xylulose 5-phosphate: step 4/6. Functionally, involved in the biosynthesis of isopentenyl diphosphate (IPP) and dimethylallyl diphosphate (DMAPP), two major building blocks of isoprenoid compounds. Catalyzes the conversion of 4-diphosphocytidyl-2-C-methyl-D-erythritol 2-phosphate (CDP-ME2P) to 2-C-methyl-D-erythritol 2,4-cyclodiphosphate (ME-CPP) with a corresponding release of cytidine 5-monophosphate (CMP). The protein is 2-C-methyl-D-erythritol 2,4-cyclodiphosphate synthase of Bordetella petrii (strain ATCC BAA-461 / DSM 12804 / CCUG 43448).